We begin with the raw amino-acid sequence, 399 residues long: Cell division protein FtsZ (399 aa).

Residues 18-22 (GGGVN), 105-107 (GTG), Glu-136, Arg-140, and Asp-184 contribute to the GTP site. The disordered stretch occupies residues 311 to 399 (GFDGGQPPSK…EELDVPDFLK (89 aa)). The span at 388 to 399 (AAEELDVPDFLK) shows a compositional bias: acidic residues.

Belongs to the FtsZ family. In terms of assembly, homodimer. Polymerizes to form a dynamic ring structure in a strictly GTP-dependent manner. Interacts directly with several other division proteins.

Its subcellular location is the cytoplasm. Its function is as follows. Essential cell division protein that forms a contractile ring structure (Z ring) at the future cell division site. The regulation of the ring assembly controls the timing and the location of cell division. One of the functions of the FtsZ ring is to recruit other cell division proteins to the septum to produce a new cell wall between the dividing cells. Binds GTP and shows GTPase activity. This Streptomyces coelicolor (strain ATCC BAA-471 / A3(2) / M145) protein is Cell division protein FtsZ.